The chain runs to 327 residues: GMP reductase (327 aa).

The active-site Thioimidate intermediate is the Cys176. 205–228 (IIADGGIRTHGDIAKSIRFGASMV) contributes to the NADP(+) binding site.

The protein belongs to the IMPDH/GMPR family. GuaC type 2 subfamily.

It catalyses the reaction IMP + NH4(+) + NADP(+) = GMP + NADPH + 2 H(+). Functionally, catalyzes the irreversible NADPH-dependent deamination of GMP to IMP. It functions in the conversion of nucleobase, nucleoside and nucleotide derivatives of G to A nucleotides, and in maintaining the intracellular balance of A and G nucleotides. In Streptococcus pyogenes serotype M5 (strain Manfredo), this protein is GMP reductase.